The chain runs to 604 residues: Beta-alanine transporter (604 aa).

Residues 1–23 (MDFDEVLREVGSFGLYQKVIICS) are Cytoplasmic-facing. The chain crosses the membrane as a helical span at residues 24 to 44 (VLLPAALPCAFHAYSQLFIAA). The Extracellular segment spans residues 45–151 (TPQHFCRVPE…QEWNLVCDRS (107 aa)). 2 N-linked (GlcNAc...) asparagine glycosylation sites follow: N68 and N88. The helical transmembrane segment at 152–172 (FLVTLALVVFGVGGLLGNYVF) threads the bilayer. Over 173–182 (GYLVDLWGRR) the chain is Cytoplasmic. The helical transmembrane segment at 183–203 (PSFYAYLLLEIIACAASAFAW) threads the bilayer. Residues 204 to 212 (NYYTWLGLR) are Extracellular-facing. A helical membrane pass occupies residues 213–233 (FVVGLTVPAILASPYVLAIEL). Topologically, residues 234–243 (VGPERRVFCT) are cytoplasmic. A helical transmembrane segment spans residues 244–264 (IVSNIAYSLGLVVLAGVIYIV). Residues 265–268 (RDWR) lie on the Extracellular side of the membrane. A helical transmembrane segment spans residues 269–289 (ELSLAVSMPLLMLFSCFFVLP). At 290-362 (ESPRWLMAVG…FRGPNMRRKT (73 aa)) the chain is on the cytoplasmic side. The chain crosses the membrane as a helical span at residues 363–383 (LIITLIWFANTSVYVGLSYYA). Residues 384–390 (PALGGDE) are Extracellular-facing. Residues 391 to 411 (IWNFFLAGAVELPTYLLLWPG) traverse the membrane as a helical segment. The Cytoplasmic portion of the chain corresponds to 412–418 (LSYFGRR). Residues 419 to 439 (WILFISMLVGGVACVATFLYP) traverse the membrane as a helical segment. Over 440-442 (DIT) the chain is Extracellular. A helical transmembrane segment spans residues 443 to 463 (LLLYCVGKMGISSSFVVLPLM). Over 464-473 (ASELYPTVVR) the chain is Cytoplasmic. The chain crosses the membrane as a helical span at residues 474–494 (GLGMSFSSVISMVGPIVIPMI). Over 495-501 (NHMGQQM) the chain is Extracellular. Residues 502 to 522 (LVLPLIVMGALLILGGFASLL) traverse the membrane as a helical segment. Topologically, residues 523–604 (LPETRNRNLP…SICKNEMRTL (82 aa)) are cytoplasmic.

It belongs to the major facilitator (TC 2.A.1) superfamily. Organic cation transporter (TC 2.A.1.19) family. Expressed in the head and predominantly in the retinal pigment cells of the compound eye.

It localises to the cell membrane. Beta-alanine transporter required for the uptake of beta-alanine by the glia. Required for the recycling process of the neurotransmitter histamine in photoreceptor neurons of the compound eye and therefore for photoreceptor synaptic transmission. Following histamine release from photoreceptors and its uptake by glia, histamine is conjugated to beta-alanine by e/Ebony to form the inactive metabolite, carcinine. The protein is Beta-alanine transporter of Drosophila melanogaster (Fruit fly).